A 72-amino-acid chain; its full sequence is Translation initiation factor IF-1 (72 aa).

An S1-like domain is found at 1 to 72 (MAKEEAIEIE…TKGRITYRYK (72 aa)).

The protein belongs to the IF-1 family. In terms of assembly, component of the 30S ribosomal translation pre-initiation complex which assembles on the 30S ribosome in the order IF-2 and IF-3, IF-1 and N-formylmethionyl-tRNA(fMet); mRNA recruitment can occur at any time during PIC assembly.

The protein localises to the cytoplasm. In terms of biological role, one of the essential components for the initiation of protein synthesis. Stabilizes the binding of IF-2 and IF-3 on the 30S subunit to which N-formylmethionyl-tRNA(fMet) subsequently binds. Helps modulate mRNA selection, yielding the 30S pre-initiation complex (PIC). Upon addition of the 50S ribosomal subunit IF-1, IF-2 and IF-3 are released leaving the mature 70S translation initiation complex. The polypeptide is Translation initiation factor IF-1 (Chlorobium phaeobacteroides (strain DSM 266 / SMG 266 / 2430)).